The following is a 90-amino-acid chain: Acylphosphatase (90 aa).

An Acylphosphatase-like domain is found at 3–90; that stretch reads AIEVDVFGLV…FETNDFAIRG (88 aa). Catalysis depends on residues Arg-18 and Asn-36.

Belongs to the acylphosphatase family.

It catalyses the reaction an acyl phosphate + H2O = a carboxylate + phosphate + H(+). The chain is Acylphosphatase (acyP) from Leuconostoc mesenteroides subsp. mesenteroides (strain ATCC 8293 / DSM 20343 / BCRC 11652 / CCM 1803 / JCM 6124 / NCDO 523 / NBRC 100496 / NCIMB 8023 / NCTC 12954 / NRRL B-1118 / 37Y).